The following is a 266-amino-acid chain: Chymotrypsin-like elastase family member 1 (266 aa).

Positions 1–16 are cleaved as a signal peptide; the sequence is MLRFLVFASLVLYGHS. Positions 17-26 are cleaved as a propeptide — activation peptide; that stretch reads TQDFPETNAR. The 238-residue stretch at 27 to 264 folds into the Peptidase S1 domain; sequence VVGGAEARRN…YISWMNNVIA (238 aa). A disulfide bridge connects residues Cys56 and Cys72. His71 acts as the Charge relay system in catalysis. Residues Asp85, Asn87, Gln90, and Glu95 each coordinate Ca(2+). Residue Asp119 is the Charge relay system of the active site. 3 cysteine pairs are disulfide-bonded: Cys153–Cys220, Cys184–Cys200, and Cys210–Cys240. Ser214 functions as the Charge relay system in the catalytic mechanism.

This sequence belongs to the peptidase S1 family. Elastase subfamily. Requires Ca(2+) as cofactor. As to expression, pancreas.

It localises to the secreted. The enzyme catalyses Hydrolysis of proteins, including elastin. Preferential cleavage: Ala-|-Xaa.. Serine proteases that hydrolyze many proteins in addition to elastin. The protein is Chymotrypsin-like elastase family member 1 (Cela1) of Rattus norvegicus (Rat).